The primary structure comprises 275 residues: NH(3)-dependent NAD(+) synthetase (275 aa).

47-54 contacts ATP; it reads GISGGQDS. Aspartate 53 contacts Mg(2+). Residue arginine 141 participates in deamido-NAD(+) binding. Residue threonine 161 coordinates ATP. Glutamate 166 contributes to the Mg(2+) binding site. Positions 174 and 181 each coordinate deamido-NAD(+). Residues lysine 190 and threonine 212 each coordinate ATP. 261–262 is a deamido-NAD(+) binding site; it reads HK.

This sequence belongs to the NAD synthetase family. As to quaternary structure, homodimer.

The enzyme catalyses deamido-NAD(+) + NH4(+) + ATP = AMP + diphosphate + NAD(+) + H(+). Its pathway is cofactor biosynthesis; NAD(+) biosynthesis; NAD(+) from deamido-NAD(+) (ammonia route): step 1/1. Catalyzes the ATP-dependent amidation of deamido-NAD to form NAD. Uses ammonia as a nitrogen source. This chain is NH(3)-dependent NAD(+) synthetase, found in Latilactobacillus sakei subsp. sakei (strain 23K) (Lactobacillus sakei subsp. sakei).